A 650-amino-acid chain; its full sequence is Chaperone protein HtpG (650 aa).

Residues 1–349 form an a; substrate-binding region; that stretch reads MSKTVKKFET…SSDLPLNVSR (349 aa). The tract at residues 350 to 566 is b; the sequence is EILQEDVQIK…EHGLNANMER (217 aa). The c stretch occupies residues 567-650; sequence ILRAMNQTVP…VADGKAAAGE (84 aa).

This sequence belongs to the heat shock protein 90 family. As to quaternary structure, homodimer.

It is found in the cytoplasm. In terms of biological role, molecular chaperone. Has ATPase activity. This is Chaperone protein HtpG from Geobacter sulfurreducens (strain ATCC 51573 / DSM 12127 / PCA).